The sequence spans 84 residues: Agaphelin (84 aa).

A signal peptide spans 1-26 (MKMRVHLLAVSVLLVVLALQTTPAEA). A Kazal-like domain is found at 29–82 (NSEMATCACQLIYRPVCASNNESYSNECVLKCASETPTGRSIGLHKVKDGNCNG). 3 disulfides stabilise this stretch: Cys-35–Cys-60, Cys-37–Cys-56, and Cys-45–Cys-80. The N-linked (GlcNAc...) asparagine glycan is linked to Asn-49.

In terms of assembly, interacts with human ELANE.

Its subcellular location is the secreted. Functions as a slow and tight inhibitor of host neutrophil elastase (ELANE). Inhibits host proteinase 3 (PRTN3) and chymotrypsin. Does not inhibit other host proteases involved in coagulation or inflammation, such as cathepsin G (CTSG), trypsin, chymase, matriptase, beta-tryptase, kallikrein, urokinase-type plasminogen activator (PLAU), coagulation factors Xa (F10), XIa (F11), XIIa (F12), plasmin (PLG), thrombin (F2) and tissue-type plasminogen activator (PLAT). Inhibits host neutrophil chemotaxis induced by N-formylmethionine-leucyl-phenylalanine (fMLP) in vitro. Inhibits ELANE-mediated potentiation of platelet aggregation induced by CTSG in the host. Does not affect CTSG- or collagen-induced platelet aggregation. Blocks cleavage of tissue factor pathway inhibitor (TFPI) by ELANE in the host. Inhibits neutrophil-induced coagulation in the host by interfering with neutrophil extracellular traps (NET) formation. Exhibits anti-inflammatory activity. Reduces ischemia-induced activation of MAPK and NF-kappa-B pathways in the host. Decreases CCL2 and IL8 production in IL4- or lipopolysaccharide (LPS)-stimulated host epithelial cells. Reduces caspase-3 (CASP3)-dependent apoptosis in damaged host tissues. In Anopheles gambiae (African malaria mosquito), this protein is Agaphelin.